The sequence spans 327 residues: Serine/threonine-protein phosphatase PP1-beta catalytic subunit (327 aa).

A2 is subject to N-acetylalanine. The Mn(2+) site is built by D63, H65, D91, and N123. Residue H124 is the Proton donor of the active site. Residues H172 and H247 each coordinate Mn(2+). The tract at residues Q305–R327 is disordered.

Belongs to the PPP phosphatase family. PP-1 subfamily. Mn(2+) is required as a cofactor.

Its subcellular location is the cytoplasm. The protein resides in the nucleus. It catalyses the reaction O-phospho-L-seryl-[protein] + H2O = L-seryl-[protein] + phosphate. The catalysed reaction is O-phospho-L-threonyl-[protein] + H2O = L-threonyl-[protein] + phosphate. Its function is as follows. Protein phosphatase that associates with over 200 regulatory proteins to form highly specific holoenzymes which dephosphorylate hundreds of biological targets. Protein phosphatase (PP1) is essential for cell division, it participates in the regulation of glycogen metabolism, muscle contractility and protein synthesis. Involved in regulation of ionic conductances and long-term synaptic plasticity. In Xenopus laevis (African clawed frog), this protein is Serine/threonine-protein phosphatase PP1-beta catalytic subunit (ppp1cb).